We begin with the raw amino-acid sequence, 576 residues long: Low-affinity glucose transporter HXT4 (576 aa).

Residues 1–56 (MSEEAAYQEDTAVQNTPADALSPVESDSNSALSTPSNKAERDDMKDFDENHEESNN) are disordered. The Cytoplasmic portion of the chain corresponds to 1-66 (MSEEAAYQED…YVEIPKKPAS (66 aa)). Over residues 25 to 37 (ESDSNSALSTPSN) the composition is skewed to polar residues. The span at 38–54 (KAERDDMKDFDENHEES) shows a compositional bias: basic and acidic residues. Lys45 participates in a covalent cross-link: Glycyl lysine isopeptide (Lys-Gly) (interchain with G-Cter in ubiquitin). The helical transmembrane segment at 67 to 87 (AYVTVSICCLMVAFGGFVFGW) threads the bilayer. Residues 88–122 (DTGTISGFVAQTDFIRRFGMKHHDGTYYLSKVRTG) are Extracellular-facing. The chain crosses the membrane as a helical span at residues 123 to 143 (LIVSIFNIGCAIGGIILARLG). The Cytoplasmic portion of the chain corresponds to 144 to 149 (DMYGRK). Residues 150 to 170 (MGLIVVVVIYIIGIIIQIASI) form a helical membrane-spanning segment. Residues 171 to 180 (NKWYQYFIGR) lie on the Extracellular side of the membrane. The helical transmembrane segment at 181–201 (IISGLGVGGIAVLSPMLISEV) threads the bilayer. At 202–207 (SPKHIR) the chain is on the cytoplasmic side. Residues 208-228 (GTLVSCYQLMITLGIFLGYCT) traverse the membrane as a helical segment. Topologically, residues 229 to 242 (NYGTKTYTNSVQWR) are extracellular. The chain crosses the membrane as a helical span at residues 243–263 (VPLGLGFAWALFMIGGMTFVP). Residues 264–346 (ESPRYLVEVG…IQSLQQLTGD (83 aa)) are Cytoplasmic-facing. Residues 347–363 (NYFFYYGTTVFTAVGLE) form a helical membrane-spanning segment. The Extracellular portion of the chain corresponds to 364-369 (DSFETS). Residues 370 to 387 (IVLGIVNFASTFVGIFLV) form a helical membrane-spanning segment. Over 388-394 (ERYGRRR) the chain is Cytoplasmic. The helical transmembrane segment at 395–415 (CLLWGAASMTACMVVFASVGV) threads the bilayer. The Extracellular portion of the chain corresponds to 416–437 (TRLWPNGKKNGSSKGAGNCMIV). N-linked (GlcNAc...) asparagine glycosylation occurs at Asn425. A helical membrane pass occupies residues 438 to 458 (FTCFYLFCFATTWAPIPFVVN). Residues 459 to 475 (SETFPLRVKSKCMAIAQ) are Cytoplasmic-facing. A helical membrane pass occupies residues 476–496 (ACNWIWGFLIGFFTPFISGAI). Asp497 is a topological domain (extracellular). The helical transmembrane segment at 498–518 (FYYGYVFMGCLVFSYFYVFFF) threads the bilayer. Over 519 to 576 (VPETKGLTLEEVNTLWEEGVLPWKSPSWVPPNKRGTDYNADDLMHDDQPFYKKMFGKK) the chain is Cytoplasmic.

The protein belongs to the major facilitator superfamily. Sugar transporter (TC 2.A.1.1) family.

It is found in the cell membrane. Its activity is regulated as follows. Xylose uptake is strongly inhibited by glucose. Functionally, low-affinity glucose transporter. Can also transport xylose. This is Low-affinity glucose transporter HXT4 (HXT4) from Saccharomyces cerevisiae (strain YJM789) (Baker's yeast).